Here is a 504-residue protein sequence, read N- to C-terminus: Maturase K (504 aa).

This sequence belongs to the intron maturase 2 family. MatK subfamily.

It localises to the plastid. The protein resides in the chloroplast. Functionally, usually encoded in the trnK tRNA gene intron. Probably assists in splicing its own and other chloroplast group II introns. This is Maturase K from Turritis glabra (Tower mustard).